We begin with the raw amino-acid sequence, 369 residues long: Protein phosphatase 1 regulatory inhibitor subunit PPP1R8 homolog (369 aa).

Residues methionine 1–lysine 11 show a composition bias toward basic and acidic residues. The segment at methionine 1–proline 26 is disordered. Over residues serine 13 to alanine 23 the composition is skewed to polar residues. An FHA domain is found at histidine 87–leucine 138. The interval valine 345 to aspartate 369 is disordered. Acidic residues predominate over residues glycine 358–aspartate 369.

Interacts with human protein phosphatase PPP1C.

Its function is as follows. Inhibitor of protein-phosphatase 1 (PP1). Binds to and inhibits PP1 activity. The protein is Protein phosphatase 1 regulatory inhibitor subunit PPP1R8 homolog of Arabidopsis thaliana (Mouse-ear cress).